A 560-amino-acid chain; its full sequence is Putative ABC transporter ATP-binding protein SP_0483 (560 aa).

ABC transporter domains follow at residues 6 to 247 (IEWK…GIRE) and 297 to 528 (FRLE…ANLK). Residues 40–47 (GPSGSGKS) and 329–336 (GKNGAGKS) contribute to the ATP site.

This sequence belongs to the ABC transporter superfamily.

Its subcellular location is the cell membrane. In terms of biological role, probably part of an ABC transporter complex. Responsible for energy coupling to the transport system. The sequence is that of Putative ABC transporter ATP-binding protein SP_0483 from Streptococcus pneumoniae serotype 4 (strain ATCC BAA-334 / TIGR4).